A 151-amino-acid chain; its full sequence is Small ribosomal subunit protein uS15 (151 aa).

This sequence belongs to the universal ribosomal protein uS15 family.

This Ciona intestinalis (Transparent sea squirt) protein is Small ribosomal subunit protein uS15 (RPS13).